We begin with the raw amino-acid sequence, 330 residues long: Tryptophan--tRNA ligase (330 aa).

ATP-binding positions include 6 to 8 and 14 to 15; these read QPT and GN. Positions 7–15 match the 'HIGH' region motif; that stretch reads PTGSLHLGN. Asp-130 provides a ligand contact to L-tryptophan. ATP is bound by residues 142–144, Val-185, and 194–198; these read GED and KMSKS. A 'KMSKS' region motif is present at residues 194 to 198; it reads KMSKS.

This sequence belongs to the class-I aminoacyl-tRNA synthetase family. As to quaternary structure, homodimer.

It is found in the cytoplasm. It catalyses the reaction tRNA(Trp) + L-tryptophan + ATP = L-tryptophyl-tRNA(Trp) + AMP + diphosphate + H(+). Its function is as follows. Catalyzes the attachment of tryptophan to tRNA(Trp). The protein is Tryptophan--tRNA ligase of Thermosynechococcus vestitus (strain NIES-2133 / IAM M-273 / BP-1).